Consider the following 637-residue polypeptide: Type II restriction enzyme and methyltransferase RM.BcgI (637 aa).

This sequence in the C-terminal section; belongs to the N(4)/N(6)-methyltransferase family. As to quaternary structure, heterotrimer of two A and one B subunit. Both subunits are necessary for DNA-binding, which is sequence non-specific. Requires Mg(2+) as cofactor.

It carries out the reaction Endonucleolytic cleavage of DNA to give specific double-stranded fragments with terminal 5'-phosphates.. The enzyme catalyses a 2'-deoxyadenosine in DNA + S-adenosyl-L-methionine = an N(6)-methyl-2'-deoxyadenosine in DNA + S-adenosyl-L-homocysteine + H(+). With respect to regulation, DNA restriction requires S-adenosyl-L-methionine and Mg(2+), and is inhibited by S-adenosyl-homocysteine. SAM may be a cofactor for DNA restriction. In terms of biological role, a B, G, H and S subtype restriction enzyme that recognizes the double-stranded sequence 5'-CGAN(6)TGC-3' and cleaves bilaterally and symmetrically 10 base pairs upstream and 12 base pairs downstream of the sequence to release a 34-base pair fragment. Methylation of the recognition sequence occurs on the adenine in either one or both strands; seems to methylate restricted DNA. This subunit has no methylation or DNA restriction activity on its own. This is Type II restriction enzyme and methyltransferase RM.BcgI from Heyndrickxia coagulans (Weizmannia coagulans).